The sequence spans 419 residues: F-box/FBD/LRR-repeat protein At4g26340 (419 aa).

In terms of domain architecture, F-box spans 1 to 53 (MDRISQLSDDLLLQILSFIPGKDVVATSLLSKRWQSLWMLVSELEYDDSYHTG). LRR repeat units lie at residues 55-81 (YKSFSQFVYRSLLSNNAPVIKHLHLNL), 132-159 (TLRLINFVLLDVPSSVCLPSLKVLHLKT), 160-185 (VDYEDDASLPSLLFGCPNLEELFVER), 187-208 (DQDLEMDVTFVVPSLRRLSMID), 226-253 (YLNITDDAVYDVRQIENMPELVEAHVDI), 254-284 (TQGVTHKFLRALTSVRQLSLCLSLSEVMCPS), and 299-324 (VVKGWWDLLTSMLQDSPKLQSLKLID). Positions 339–389 (GWKLPSSVPECLLFSLEAFEWIGYKGRRGDREVATYVLKNAACLRTAKFSP) constitute an FBD domain.

This chain is F-box/FBD/LRR-repeat protein At4g26340, found in Arabidopsis thaliana (Mouse-ear cress).